Here is a 207-residue protein sequence, read N- to C-terminus: Porin MspD (207 aa).

An N-terminal signal peptide occupies residues 1 to 24 (MRYLVMMFALLVSVTLVSPRPANA).

The protein belongs to the mycobacterial porin (TC 1.B.24) family. Octamers. Probably forms a goblet with the wide end on the exterior of the outer membrane and a central channel. It is not known if mixed oligomers of MspD with other Msp subunits form in vivo.

It is found in the cell outer membrane. It localises to the secreted. The protein localises to the cell wall. In terms of biological role, a backup porin induced when MspA, the major porin, is deleted. It probably forms a water-filled channel which favors the permeation of cations. There are about 2400 porins in wild-type, 800 in an mspA deletion and 150 in a double mspA-mspC deletion. The polypeptide is Porin MspD (mspD) (Mycolicibacterium smegmatis (strain ATCC 700084 / mc(2)155) (Mycobacterium smegmatis)).